Reading from the N-terminus, the 433-residue chain is Histidinol dehydrogenase (433 aa).

3 residues coordinate NAD(+): Y129, Q191, and N214. Substrate is bound by residues S237, Q259, and H262. Zn(2+) contacts are provided by Q259 and H262. Residues E326 and H327 each act as proton acceptor in the active site. Substrate contacts are provided by H327, D360, E414, and H419. D360 lines the Zn(2+) pocket. H419 is a Zn(2+) binding site.

The protein belongs to the histidinol dehydrogenase family. It depends on Zn(2+) as a cofactor.

It catalyses the reaction L-histidinol + 2 NAD(+) + H2O = L-histidine + 2 NADH + 3 H(+). It functions in the pathway amino-acid biosynthesis; L-histidine biosynthesis; L-histidine from 5-phospho-alpha-D-ribose 1-diphosphate: step 9/9. Its function is as follows. Catalyzes the sequential NAD-dependent oxidations of L-histidinol to L-histidinaldehyde and then to L-histidine. In Methanosarcina barkeri (strain Fusaro / DSM 804), this protein is Histidinol dehydrogenase.